The following is a 576-amino-acid chain: Trehalase 2 (576 aa).

This sequence belongs to the glycosyl hydrolase 15 family.

The enzyme catalyses alpha,alpha-trehalose + H2O = alpha-D-glucose + beta-D-glucose. Its pathway is glycan degradation; trehalose degradation; D-glucose from alpha,alpha-trehalose: step 1/1. Its function is as follows. Catalyzes the hydrolysis of alpha,alpha-trehalose into two molecules of D-glucose. The polypeptide is Trehalase 2 (treH2) (Sulfolobus acidocaldarius (strain ATCC 33909 / DSM 639 / JCM 8929 / NBRC 15157 / NCIMB 11770)).